Consider the following 382-residue polypeptide: Dual-specificity RNA methyltransferase RlmN (382 aa).

The active-site Proton acceptor is the Glu-95. The Radical SAM core domain maps to 101-348 (EDDRGTLCIS…TTVRKTRGDD (248 aa)). The cysteines at positions 108 and 353 are disulfide-linked. [4Fe-4S] cluster-binding residues include Cys-115, Cys-119, and Cys-122. Residues 179–180 (GE), Ser-211, 233–235 (SLH), and Asn-310 contribute to the S-adenosyl-L-methionine site. The active-site S-methylcysteine intermediate is the Cys-353.

This sequence belongs to the radical SAM superfamily. RlmN family. [4Fe-4S] cluster is required as a cofactor.

It is found in the cytoplasm. The catalysed reaction is adenosine(2503) in 23S rRNA + 2 reduced [2Fe-2S]-[ferredoxin] + 2 S-adenosyl-L-methionine = 2-methyladenosine(2503) in 23S rRNA + 5'-deoxyadenosine + L-methionine + 2 oxidized [2Fe-2S]-[ferredoxin] + S-adenosyl-L-homocysteine. It carries out the reaction adenosine(37) in tRNA + 2 reduced [2Fe-2S]-[ferredoxin] + 2 S-adenosyl-L-methionine = 2-methyladenosine(37) in tRNA + 5'-deoxyadenosine + L-methionine + 2 oxidized [2Fe-2S]-[ferredoxin] + S-adenosyl-L-homocysteine. In terms of biological role, specifically methylates position 2 of adenine 2503 in 23S rRNA and position 2 of adenine 37 in tRNAs. m2A2503 modification seems to play a crucial role in the proofreading step occurring at the peptidyl transferase center and thus would serve to optimize ribosomal fidelity. The polypeptide is Dual-specificity RNA methyltransferase RlmN (Bordetella parapertussis (strain 12822 / ATCC BAA-587 / NCTC 13253)).